A 495-amino-acid chain; its full sequence is Adenosylhomocysteinase (495 aa).

Substrate is bound by residues Thr-71, Asp-156, and Glu-218. 219–221 (TTT) is an NAD(+) binding site. The substrate site is built by Lys-248 and Asp-252. Residues Asn-253, 282–287 (GYGDVG), Glu-305, Asn-340, 361–363 (IGH), and Asn-409 contribute to the NAD(+) site.

The protein belongs to the adenosylhomocysteinase family. The cofactor is NAD(+).

The protein localises to the cytoplasm. The catalysed reaction is S-adenosyl-L-homocysteine + H2O = L-homocysteine + adenosine. Its pathway is amino-acid biosynthesis; L-homocysteine biosynthesis; L-homocysteine from S-adenosyl-L-homocysteine: step 1/1. Functionally, may play a key role in the regulation of the intracellular concentration of adenosylhomocysteine. In Mycobacterium tuberculosis (strain ATCC 25177 / H37Ra), this protein is Adenosylhomocysteinase.